The sequence spans 657 residues: Filensin (657 aa).

The interval Met-1–Gly-38 is head. Residues Gly-38 to Leu-318 form the IF rod domain. A coil 1A region spans residues Leu-39–Phe-73. Residues Gln-74 to Leu-82 form a linker 1 region. The tract at residues Asp-83 to Gln-182 is coil 1B. Residues Thr-183–Ser-199 are linker 12. The segment at Pro-200–Leu-318 is coil 2. The tail stretch occupies residues Asn-319–Ser-657. 2 disordered regions span residues Ile-503–Arg-530 and Pro-565–Asp-593. A compositionally biased stretch (basic and acidic residues) spans Pro-519–Arg-530.

This sequence belongs to the intermediate filament family. Detected in eye lens fiber cells (at protein level). Detected in embryonic eye lens.

The protein resides in the cell membrane. The protein localises to the cytoplasm. Its subcellular location is the cytoskeleton. It localises to the cell cortex. Its function is as follows. Required for the correct formation of lens intermediate filaments. In Gallus gallus (Chicken), this protein is Filensin (BFSP1).